The following is a 320-amino-acid chain: tRNA dimethylallyltransferase (320 aa).

16 to 23 is a binding site for ATP; the sequence is GPTASGKT. A substrate-binding site is contributed by 18–23; the sequence is TASGKT. 3 interaction with substrate tRNA regions span residues 41–44, 165–169, and 247–252; these read DSAL, QRIQR, and RCVGYR.

Belongs to the IPP transferase family. In terms of assembly, monomer. Requires Mg(2+) as cofactor.

It carries out the reaction adenosine(37) in tRNA + dimethylallyl diphosphate = N(6)-dimethylallyladenosine(37) in tRNA + diphosphate. In terms of biological role, catalyzes the transfer of a dimethylallyl group onto the adenine at position 37 in tRNAs that read codons beginning with uridine, leading to the formation of N6-(dimethylallyl)adenosine (i(6)A). The protein is tRNA dimethylallyltransferase of Azoarcus sp. (strain BH72).